The primary structure comprises 67 residues: Arasin 2 (67 aa).

Positions 1 to 25 are cleaved as a signal peptide; sequence MERRTLLVVLLVCSCVVAAAAEASP. Residues 22-44 are disordered; the sequence is EASPSRWPSPGRPRPFPGRPNPI. Positions 31–44 are enriched in pro residues; the sequence is PGRPRPFPGRPNPI. 2 disulfides stabilise this stretch: Cys-50-Cys-59 and Cys-52-Cys-57.

In terms of assembly, interacts with chitin through the N-terminal region (26-48). This interaction may be important, since chitin is a component of the fungal cell wall, as well as of the crab exoskeleton (permitting a possible action of arasin in wound healing in case of lesions). In terms of processing, disulfide bonds are important for activity especially against Gram-negative bacteria, since the linearization of the peptide causes a strong decrease of activity on these bacteria. Mainly expressed in hemocytes. No or very low expression in heart, gills, inestines, and epidermis.

In terms of biological role, antimicrobial peptide that has a large activity spectrum with activity against Gram-positive, Gram-negative bacteria, as well as against fungi. Shows activity at micromolar concentrations. Displays minimal inhibitory concentration (MIC) values lower than minimal bactericidal concentrations (MBC). May have a dual mode of action depending on the peptide concentrations. At MIC concentrations, the peptide penetrates into the cytoplasm of target cells (tested on the Gram-negative E.coli). The two inner membrane proteins YgdD and SbmA may be required for this uptake. At concentrations higher than MIC, arasin may act by disrupting membranes. Does not show hemolytic activity. This is Arasin 2 from Hyas araneus (Atlantic lyre crab).